The sequence spans 792 residues: Type 2 topoisomerase subunit B (792 aa).

The 115-residue stretch at 423–537 (CEIFLVEGDS…EGYVYIAEPP (115 aa)) folds into the Toprim domain. Mg(2+) is bound by residues Glu-429, Asp-502, and Asp-504.

The protein belongs to the type II topoisomerase GyrB family. Heterotetramer, composed of two GyrA and two GyrB chains. In the heterotetramer, 'GyrA' contains the active site tyrosine that forms a transient covalent intermediate with DNA, while 'GyrB' binds cofactors and catalyzes ATP hydrolysis. The cofactor is Mg(2+). Mn(2+) serves as cofactor. Ca(2+) is required as a cofactor.

It is found in the cytoplasm. The catalysed reaction is ATP-dependent breakage, passage and rejoining of double-stranded DNA.. A type II topoisomerase. Despite its similarity to DNA gyrase, this enzyme is not able to supercoil DNA, and instead acts like topoisomerase IV. Relaxes both positively and negatively supercoiled DNA in an ATP-dependent fashion, decatenates interlocked circles. If this subunit is reconstituted with GyrA from E.coli the hybrid enzyme supercoils relaxed plasmid DNA; if paired with E.coli ParC supercoiling is not restored. This the first bacteria shown to not contain DNA gyrase, although it has 2 copies of a reverse gyrase that introduces positive supercoils. Type II topoisomerases break and join 2 DNA strands simultaneously in an ATP-dependent manner. In Aquifex aeolicus (strain VF5), this protein is Type 2 topoisomerase subunit B.